The chain runs to 409 residues: 3-isopropylmalate dehydrogenase 1, chloroplastic (409 aa).

The N-terminal 37 residues, 1-37, are a transit peptide targeting the chloroplast; the sequence is MAAFLQTNISLNAIKIVPGKYSSLTDHQFRAPYRIRC. Serine 74 is subject to Phosphoserine. 118-133 provides a ligand contact to NAD(+); that stretch reads IGGYKWDKNEKHLRPE. Positions 140, 150, and 178 each coordinate substrate. Residue asparagine 238 participates in NAD(+) binding. Aspartate 268 contacts substrate. Aspartate 268 contacts Mg(2+). Position 269 (asparagine 269) interacts with NAD(+). 2 residues coordinate Mg(2+): aspartate 292 and aspartate 296. Residue 322 to 338 participates in NAD(+) binding; it reads EPIHGSAPDIAGQDKAN.

Belongs to the isocitrate and isopropylmalate dehydrogenases family. In terms of assembly, homodimer. Requires Mg(2+) as cofactor. The cofactor is Mn(2+). Highly expressed in seedlings, leaves, stems and roots and, to a lower extent, in flowers, pollen and siliques.

The protein resides in the plastid. It localises to the chloroplast stroma. It carries out the reaction (2R,3S)-3-isopropylmalate + NAD(+) = 4-methyl-2-oxopentanoate + CO2 + NADH. It functions in the pathway amino-acid biosynthesis; L-leucine biosynthesis; L-leucine from 3-methyl-2-oxobutanoate: step 3/4. The protein operates within secondary metabolite biosynthesis. With respect to regulation, regulated by a thiol-based redox modification; oxidation by CuCl(2) leads to a decreased activity. In terms of biological role, involved in both glucosinolate and leucine biosynthesis; catalyzes the oxidative decarboxylation step in both leucine biosynthesis (primary metabolism) and methionine chain elongation of glucosinolates (specialized metabolism). Catalyzes the oxidation of 3-carboxy-2-hydroxy-4-methylpentanoate (3-isopropylmalate, 3-IPM) to 3-carboxy-4-methyl-2-oxopentanoate. The product decarboxylates to 4-methyl-2 oxopentanoate. Required during pollen development and involved in embryo sac development. More active on 3-isopropylmalate and NAD(+) than towards D-malate. The chain is 3-isopropylmalate dehydrogenase 1, chloroplastic from Arabidopsis thaliana (Mouse-ear cress).